Here is a 1062-residue protein sequence, read N- to C-terminus: Suppressor of mar1-1 protein (1062 aa).

Residues 1-17 (MSENTTAPSDNITNEQR) are compositionally biased toward polar residues. Disordered stretches follow at residues 1–27 (MSEN…DDVD), 188–217 (ENSS…ASTS), 267–337 (TKQE…KKRT), 370–398 (SSKF…SATQ), 595–634 (EIST…QQEG), and 681–804 (SGEE…GNLG). The residue at position 2 (Ser-2) is an N-acetylserine. Residues 189 to 205 (NSSNNTSSQHNTSSSRR) show a composition bias toward low complexity. Polar residues-rich tracts occupy residues 267–279 (TKQE…APSS), 287–298 (SLTSVPQRTNNE), and 305–323 (STAN…NNLI). Basic residues predominate over residues 325–335 (IKRKRGRPPKK). Composition is skewed to polar residues over residues 370–385 (SSKF…NPVS) and 610–629 (TKGS…GISD). Phosphoserine occurs at positions 378, 379, 628, and 681. The span at 685–699 (AITKENAEYERKTPG) shows a compositional bias: basic and acidic residues. Thr-697 carries the post-translational modification Phosphothreonine. The segment covering 704–716 (TTFVPLENSQPSD) has biased composition (polar residues). Phosphoserine; by ATM or ATR is present on Ser-712. Ser-738 carries the phosphoserine modification. A compositionally biased stretch (polar residues) spans 781–793 (KGTSSIHNDTESA). A Phosphothreonine modification is found at Thr-817.

Interacts with RFM1. This interaction is required to recruit HST1.

It localises to the nucleus. Functionally, DNA-binding protein that specifically binds the regulatory region of middle sporulation genes (MSE). Required for the repression of middle sporulation genes during vegetative growth. Represses expression via the recruitment of histone deacetylase HST1. This chain is Suppressor of mar1-1 protein (SUM1), found in Saccharomyces cerevisiae (strain ATCC 204508 / S288c) (Baker's yeast).